Here is a 185-residue protein sequence, read N- to C-terminus: Ribosome-recycling factor (185 aa).

This sequence belongs to the RRF family.

It localises to the cytoplasm. Responsible for the release of ribosomes from messenger RNA at the termination of protein biosynthesis. May increase the efficiency of translation by recycling ribosomes from one round of translation to another. The sequence is that of Ribosome-recycling factor from Yersinia pseudotuberculosis serotype O:1b (strain IP 31758).